The primary structure comprises 149 residues: Nucleoside diphosphate kinase (149 aa).

Residues Lys-9, Phe-57, Arg-85, Thr-91, Arg-102, and Asn-112 each coordinate ATP. His-115 (pros-phosphohistidine intermediate) is an active-site residue.

This sequence belongs to the NDK family. As to quaternary structure, homotetramer. Mg(2+) serves as cofactor.

The protein resides in the cytoplasm. The catalysed reaction is a 2'-deoxyribonucleoside 5'-diphosphate + ATP = a 2'-deoxyribonucleoside 5'-triphosphate + ADP. It catalyses the reaction a ribonucleoside 5'-diphosphate + ATP = a ribonucleoside 5'-triphosphate + ADP. Functionally, major role in the synthesis of nucleoside triphosphates other than ATP. The ATP gamma phosphate is transferred to the NDP beta phosphate via a ping-pong mechanism, using a phosphorylated active-site intermediate. The sequence is that of Nucleoside diphosphate kinase from Desulforamulus reducens (strain ATCC BAA-1160 / DSM 100696 / MI-1) (Desulfotomaculum reducens).